The chain runs to 208 residues: Small ribosomal subunit protein uS4 (208 aa).

The S4 RNA-binding domain occupies 98–163 (QRLDNVVYRM…NPQITRAIEL (66 aa)).

This sequence belongs to the universal ribosomal protein uS4 family. In terms of assembly, part of the 30S ribosomal subunit. Contacts protein S5. The interaction surface between S4 and S5 is involved in control of translational fidelity.

Functionally, one of the primary rRNA binding proteins, it binds directly to 16S rRNA where it nucleates assembly of the body of the 30S subunit. With S5 and S12 plays an important role in translational accuracy. This Campylobacter jejuni subsp. jejuni serotype O:6 (strain 81116 / NCTC 11828) protein is Small ribosomal subunit protein uS4.